Reading from the N-terminus, the 443-residue chain is Amino-acid acetyltransferase (443 aa).

An N-acetyltransferase domain is found at 296–443 (EQIRRATIND…RSKVLMADLG (148 aa)).

Belongs to the acetyltransferase family. ArgA subfamily. In terms of assembly, homohexamer.

The protein localises to the cytoplasm. The catalysed reaction is L-glutamate + acetyl-CoA = N-acetyl-L-glutamate + CoA + H(+). It functions in the pathway amino-acid biosynthesis; L-arginine biosynthesis; N(2)-acetyl-L-ornithine from L-glutamate: step 1/4. The protein is Amino-acid acetyltransferase (argA) of Salmonella typhi.